Here is a 111-residue protein sequence, read N- to C-terminus: Prefoldin subunit 2 (111 aa).

Coiled-coil stretches lie at residues 1 to 36 (MEQR…KDEH) and 72 to 92 (LETK…TLIQ).

This sequence belongs to the prefoldin subunit beta family. As to quaternary structure, heterohexamer of two PFD-alpha type and four PFD-beta type subunits.

It localises to the cytoplasm. Functionally, binds specifically to cytosolic chaperonin (c-CPN) and transfers target proteins to it. Binds to nascent polypeptide chain and promotes folding in an environment in which there are many competing pathways for nonnative proteins. The polypeptide is Prefoldin subunit 2 (GIM4) (Saccharomyces cerevisiae (strain ATCC 204508 / S288c) (Baker's yeast)).